A 314-amino-acid polypeptide reads, in one-letter code: Pectin lyase (314 aa).

R202 is a catalytic residue.

The protein belongs to the polysaccharide lyase 1 family.

It catalyses the reaction Eliminative cleavage of (1-&gt;4)-alpha-D-galacturonan methyl ester to give oligosaccharides with 4-deoxy-6-O-methyl-alpha-D-galact-4-enuronosyl groups at their non-reducing ends.. This is Pectin lyase (pnl) from Pectobacterium carotovorum (Erwinia carotovora).